The sequence spans 1081 residues: Cellulose synthase A catalytic subunit 1 [UDP-forming] (1081 aa).

Met-1 is modified (N-acetylmethionine). Topologically, residues 1 to 270 (MEASAGLVAG…SRVVPIPSSR (270 aa)) are cytoplasmic. Zn(2+)-binding residues include Cys-39, Cys-42, Cys-58, Cys-61, Cys-66, Cys-69, Cys-81, and Cys-84. The segment at 39–85 (CQICGDDVGLAETGDVFVACNECAFPVCRPCYEYERKDGTQCCPQCK) adopts an RING-type; degenerate zinc-finger fold. Residues 118–195 (GANKARHQRH…RQPVPVRIVD (78 aa)) form a disordered region. Residues 127 to 139 (HGEEFSSSSRHES) show a composition bias toward basic and acidic residues. A compositionally biased stretch (polar residues) spans 158 to 168 (PDTQSVRTTSG). A helical membrane pass occupies residues 271 to 291 (LTPYRVVIILRLIILCFFLQY). Residues 292-299 (RTTHPVKN) are Extracellular-facing. A helical transmembrane segment spans residues 300–320 (AYPLWLTSVICEIWFAFSWLL). The Cytoplasmic segment spans residues 321–856 (DQFPKWYPIN…LLERIAYINT (536 aa)). UDP-alpha-D-glucose contacts are provided by Ser-359, Lys-365, Glu-366, and Asp-395. Residue Asp-395 is part of the active site. A coiled-coil region spans residues 449–476 (VKERRAMKREYEEFKVRINALVAKAQKI). UDP-alpha-D-glucose is bound at residue Lys-536. 2 residues coordinate Mn(2+): Lys-537 and Asp-561. Residue Asp-780 is part of the active site. Residues 857 to 877 (IVYPITSIPLIAYCILPAFCL) traverse the membrane as a helical segment. The Extracellular segment spans residues 878 to 889 (ITDRFIIPEISN). The chain crosses the membrane as a helical span at residues 890 to 910 (YASIWFILLFISIAVTGILEL). The Cytoplasmic segment spans residues 911–925 (RWSGVSIEDWWRNEQ). A helical transmembrane segment spans residues 926–946 (FWVIGGTSAHLFAVFQGLLKV). At 947–976 (LAGIDTNFTVTSKATDEDGDFAELYIFKWT) the chain is on the extracellular side. N-linked (GlcNAc...) asparagine glycosylation occurs at Asn-953. A helical membrane pass occupies residues 977–997 (ALLIPPTTVLLVNLIGIVAGV). At 998-1008 (SYAVNSGYQSW) the chain is on the cytoplasmic side. A helical membrane pass occupies residues 1009 to 1029 (GPLFGKLFFALWVIAHLYPFL). Over 1030-1038 (KGLLGRQNR) the chain is Extracellular. A helical transmembrane segment spans residues 1039–1059 (TPTIVIVWSVLLASIFSLLWV). Topologically, residues 1060-1081 (RINPFVDANPNANNFNGKGGVF) are cytoplasmic.

It belongs to the glycosyltransferase 2 family. Plant cellulose synthase subfamily. Interacts with CESA3 and CESA6. Assembly with CESA3 and CESA6 is required for functional complex in primary cell wall cellulose synthesis. Interacts with STL1 and STL2, but not with GOT1. Binds to CSI1. Interacts with PAT24/TIP1. Zn(2+) serves as cofactor. The cofactor is Mn(2+). S-acylated. In terms of tissue distribution, expressed in germinating seeds, seedlings, roots, stems, shoots leaves and flowers, but not in mature flowers.

The protein localises to the cell membrane. The catalysed reaction is [(1-&gt;4)-beta-D-glucosyl](n) + UDP-alpha-D-glucose = [(1-&gt;4)-beta-D-glucosyl](n+1) + UDP + H(+). It participates in glycan metabolism; plant cellulose biosynthesis. Its function is as follows. Catalytic subunit of cellulose synthase terminal complexes ('rosettes'), required for beta-1,4-glucan microfibril crystallization, a major mechanism of the cell wall formation. Involved in the primary cell wall formation. Required during embryogenesis for cell elongation, orientation of cell expansion and complex cell wall formations, such as interdigitated pattern of epidermal pavement cells, stomatal guard cells and trichomes. Plays a role in lateral roots formation, but seems not necessary for the development of tip-growing cells such as root hairs. The presence of each protein CESA1 and CESA6 is critical for cell expansion after germination. The sequence is that of Cellulose synthase A catalytic subunit 1 [UDP-forming] from Arabidopsis thaliana (Mouse-ear cress).